A 204-amino-acid polypeptide reads, in one-letter code: Probable UbiX-like flavin prenyltransferase (204 aa).

FMN-binding positions include 21-23, Ser-47, 98-101, and Arg-133; these read GAT and SMKS.

This sequence belongs to the UbiX/PAD1 family. YclB subfamily. Homododecamer.

The enzyme catalyses dimethylallyl phosphate + FMNH2 = prenylated FMNH2 + phosphate. Involved in the non-oxidative decarboxylation and detoxification of phenolic derivatives under both aerobic and anaerobic conditions. Flavin prenyltransferase that catalyzes the synthesis of the prenylated FMN cofactor (prenyl-FMN) for phenolic acid decarboxylase. The chain is Probable UbiX-like flavin prenyltransferase from Bacillus subtilis (strain 168).